The chain runs to 660 residues: Threonine--tRNA ligase (660 aa).

Positions 1-49 (MPINEIRVQKGQRYRDAINDKKVIAVKKGDKFLDLDEIAGEDEAVQPVY) constitute a TGS domain. Residues 225–554 (DHRKIIAEMD…LLEHFAGKLP (330 aa)) form a catalytic region. Cysteine 318, histidine 369, and histidine 531 together coordinate Zn(2+).

It belongs to the class-II aminoacyl-tRNA synthetase family. Homodimer. Zn(2+) serves as cofactor.

It is found in the cytoplasm. The catalysed reaction is tRNA(Thr) + L-threonine + ATP = L-threonyl-tRNA(Thr) + AMP + diphosphate + H(+). In terms of biological role, catalyzes the attachment of threonine to tRNA(Thr) in a two-step reaction: L-threonine is first activated by ATP to form Thr-AMP and then transferred to the acceptor end of tRNA(Thr). The chain is Threonine--tRNA ligase from Thermoplasma volcanium (strain ATCC 51530 / DSM 4299 / JCM 9571 / NBRC 15438 / GSS1).